The following is a 141-amino-acid chain: uncharacterized protein (141 aa).

The protein belongs to the PhzA/PhzB family.

This is an uncharacterized protein from Pseudomonas aeruginosa (strain ATCC 15692 / DSM 22644 / CIP 104116 / JCM 14847 / LMG 12228 / 1C / PRS 101 / PAO1).